The chain runs to 355 residues: Protein MGF 360-3L (355 aa).

The stretch at K60 to L92 is one ANK repeat.

It belongs to the asfivirus MGF 360 family.

Plays a role in virus cell tropism, and may be required for efficient virus replication in macrophages. The sequence is that of Protein MGF 360-3L from Ornithodoros (relapsing fever ticks).